Here is a 540-residue protein sequence, read N- to C-terminus: L-aspartate oxidase (540 aa).

FAD is bound by residues 16 to 19 (SGAA), lysine 38, 45 to 52 (STFYAQGG), and aspartate 223. Residue arginine 290 is the Proton donor/acceptor of the active site. FAD is bound by residues glutamate 375 and 391 to 392 (SL).

It belongs to the FAD-dependent oxidoreductase 2 family. NadB subfamily. The cofactor is FAD.

The protein localises to the cytoplasm. The enzyme catalyses L-aspartate + O2 = iminosuccinate + H2O2. It catalyses the reaction fumarate + L-aspartate = iminosuccinate + succinate. It participates in cofactor biosynthesis; NAD(+) biosynthesis; iminoaspartate from L-aspartate (oxidase route): step 1/1. In terms of biological role, catalyzes the oxidation of L-aspartate to iminoaspartate, the first step in the de novo biosynthesis of NAD(+). Can use either oxygen or fumarate as electron acceptors, which allows the enzyme to be functional under aerobic and anaerobic conditions. The chain is L-aspartate oxidase (nadB) from Escherichia coli O157:H7.